Here is a 78-residue protein sequence, read N- to C-terminus: Magnetosome protein MamL (78 aa).

Residues 1 to 22 (MVRVIGSLVFGGLILLLASSNA) form the signal peptide. Topologically, residues 23–38 (HMVETRFGPLIMLAPH) are lumenal. Residues 39-59 (FVVLGITFFLGFAIGIVLVFA) traverse the membrane as a helical segment. The Cytoplasmic segment spans residues 60–78 (NVMKRRKHKLPGKNIVIKR).

This sequence belongs to the magnetosome MamL family.

The protein localises to the magnetosome membrane. Functionally, involved in magnetite crystal maturation, but not in magnetosome vesicle tubulation or formation. One of 7 genes (mamLQBIEMO) able to induce magnetosome membrane biogenesis; coexpression of mamLQRBIEMO in a deletion of the 17 gene mamAB operon restores magnetosome vesicle formation but not magnetite biosynthesis. The chain is Magnetosome protein MamL from Magnetospirillum gryphiswaldense (strain DSM 6361 / JCM 21280 / NBRC 15271 / MSR-1).